The primary structure comprises 233 residues: Ion-translocating oxidoreductase complex subunit E (233 aa).

5 helical membrane-spanning segments follow: residues 22–42 (LLGL…LGLG), 69–89 (IPIY…LINA), 93–113 (GLYQ…IVVG), 128–148 (ALDG…LGSI), and 182–202 (PMLL…LLAA).

It belongs to the NqrDE/RnfAE family. As to quaternary structure, the complex is composed of six subunits: RnfA, RnfB, RnfC, RnfD, RnfE and RnfG.

The protein resides in the cell inner membrane. Its function is as follows. Part of a membrane-bound complex that couples electron transfer with translocation of ions across the membrane. This is Ion-translocating oxidoreductase complex subunit E from Erwinia tasmaniensis (strain DSM 17950 / CFBP 7177 / CIP 109463 / NCPPB 4357 / Et1/99).